A 494-amino-acid chain; its full sequence is Probable cytochrome P450 313a4 (494 aa).

Heme is bound at residue Cys440.

Belongs to the cytochrome P450 family. Requires heme as cofactor.

The protein localises to the endoplasmic reticulum membrane. It is found in the microsome membrane. Its function is as follows. May be involved in the metabolism of insect hormones and in the breakdown of synthetic insecticides. The protein is Probable cytochrome P450 313a4 (Cyp313a4) of Drosophila melanogaster (Fruit fly).